Consider the following 428-residue polypeptide: Involucrin (428 aa).

Disordered regions lie at residues 1–128 (MSQQ…EEKK) and 140–398 (KRDD…GQAQ). Residues 56-76 (PSKHEEKHVTIVKGVPEHECE) show a composition bias toward basic and acidic residues. Positions 77-92 (QQQQAQGQERQQQHWG) are enriched in low complexity. 3 stretches are compositionally biased toward basic and acidic residues: residues 107–117 (LKQEEAQREKQ), 162–174 (QLKH…KPLE), and 192–208 (QLKH…HLEQ). Over residues 209–218 (QEGQLELPEQ) the composition is skewed to low complexity. The span at 220-297 (DQPKHLEQLE…CEGQLEHLEQ (78 aa)) shows a compositional bias: basic and acidic residues. Residues 298–311 (QEGQLELPEQQVGQ) are compositionally biased toward low complexity. Basic and acidic residues-rich tracts occupy residues 313–327 (KHLE…HPEQ), 352–366 (KHLE…HPEQ), and 374–385 (QLKDLEQQERQL).

It belongs to the involucrin family. In terms of assembly, directly or indirectly cross-linked to cornifelin (CNFN). Substrate of transglutaminase. Specific glutamines or lysines are cross-linked to keratins, desmoplakin and to inter involucrin molecules. In terms of tissue distribution, keratinocytes of epidermis and other stratified squamous epithelia.

It is found in the cytoplasm. Its function is as follows. Part of the insoluble cornified cell envelope (CE) of stratified squamous epithelia. In Cebus albifrons (White-fronted capuchin), this protein is Involucrin (IVL).